Reading from the N-terminus, the 460-residue chain is Bifunctional protein GlmU (460 aa).

The pyrophosphorylase stretch occupies residues 1–229 (MTNYAIILAA…FNESLGVNDR (229 aa)). Residues 8–11 (LAAG), Lys22, Gln72, and 77–78 (GT) contribute to the UDP-N-acetyl-alpha-D-glucosamine site. Asp102 serves as a coordination point for Mg(2+). Gly139, Glu154, Asn169, and Asn227 together coordinate UDP-N-acetyl-alpha-D-glucosamine. A Mg(2+)-binding site is contributed by Asn227. Residues 230-250 (VALAIAETVMRQRITQKHMVN) form a linker region. The segment at 251–460 (GVTFQNPETV…RLAHHPSRSK (210 aa)) is N-acetyltransferase. UDP-N-acetyl-alpha-D-glucosamine is bound by residues Arg332 and Lys350. His362 acts as the Proton acceptor in catalysis. Residues Tyr365 and Asn376 each coordinate UDP-N-acetyl-alpha-D-glucosamine. Residues Ala379, 385 to 386 (NY), Ser404, Ala422, and Arg439 each bind acetyl-CoA.

It in the N-terminal section; belongs to the N-acetylglucosamine-1-phosphate uridyltransferase family. This sequence in the C-terminal section; belongs to the transferase hexapeptide repeat family. As to quaternary structure, homotrimer. Mg(2+) serves as cofactor.

It is found in the cytoplasm. It carries out the reaction alpha-D-glucosamine 1-phosphate + acetyl-CoA = N-acetyl-alpha-D-glucosamine 1-phosphate + CoA + H(+). It catalyses the reaction N-acetyl-alpha-D-glucosamine 1-phosphate + UTP + H(+) = UDP-N-acetyl-alpha-D-glucosamine + diphosphate. The protein operates within nucleotide-sugar biosynthesis; UDP-N-acetyl-alpha-D-glucosamine biosynthesis; N-acetyl-alpha-D-glucosamine 1-phosphate from alpha-D-glucosamine 6-phosphate (route II): step 2/2. It functions in the pathway nucleotide-sugar biosynthesis; UDP-N-acetyl-alpha-D-glucosamine biosynthesis; UDP-N-acetyl-alpha-D-glucosamine from N-acetyl-alpha-D-glucosamine 1-phosphate: step 1/1. It participates in bacterial outer membrane biogenesis; LPS lipid A biosynthesis. Functionally, catalyzes the last two sequential reactions in the de novo biosynthetic pathway for UDP-N-acetylglucosamine (UDP-GlcNAc). The C-terminal domain catalyzes the transfer of acetyl group from acetyl coenzyme A to glucosamine-1-phosphate (GlcN-1-P) to produce N-acetylglucosamine-1-phosphate (GlcNAc-1-P), which is converted into UDP-GlcNAc by the transfer of uridine 5-monophosphate (from uridine 5-triphosphate), a reaction catalyzed by the N-terminal domain. In Streptococcus pyogenes serotype M1, this protein is Bifunctional protein GlmU.